A 176-amino-acid polypeptide reads, in one-letter code: Urease accessory protein UreE (176 aa).

Positions 134–176 (EAGAYGSGGHHHHGESSQGHAHGPLAPIPVHQKIHRPSDIPSR) are disordered.

Belongs to the UreE family.

Its subcellular location is the cytoplasm. In terms of biological role, involved in urease metallocenter assembly. Binds nickel. Probably functions as a nickel donor during metallocenter assembly. The sequence is that of Urease accessory protein UreE from Nitrosospira multiformis (strain ATCC 25196 / NCIMB 11849 / C 71).